The sequence spans 238 residues: Demethylmenaquinone methyltransferase (238 aa).

Residues Thr65, Asp85, and 109–110 (DA) each bind S-adenosyl-L-methionine.

It belongs to the class I-like SAM-binding methyltransferase superfamily. MenG/UbiE family.

It catalyses the reaction a 2-demethylmenaquinol + S-adenosyl-L-methionine = a menaquinol + S-adenosyl-L-homocysteine + H(+). Its pathway is quinol/quinone metabolism; menaquinone biosynthesis; menaquinol from 1,4-dihydroxy-2-naphthoate: step 2/2. Methyltransferase required for the conversion of demethylmenaquinol (DMKH2) to menaquinol (MKH2). The protein is Demethylmenaquinone methyltransferase of Roseiflexus sp. (strain RS-1).